Here is a 421-residue protein sequence, read N- to C-terminus: UDP-N-acetylglucosamine 1-carboxyvinyltransferase (421 aa).

22–23 (KN) contacts phosphoenolpyruvate. Arg93 contacts UDP-N-acetyl-alpha-D-glucosamine. Cys117 acts as the Proton donor in catalysis. A 2-(S-cysteinyl)pyruvic acid O-phosphothioketal modification is found at Cys117. UDP-N-acetyl-alpha-D-glucosamine-binding positions include 122–126 (RPVDL), Asp308, and Ile330.

Belongs to the EPSP synthase family. MurA subfamily.

The protein localises to the cytoplasm. The catalysed reaction is phosphoenolpyruvate + UDP-N-acetyl-alpha-D-glucosamine = UDP-N-acetyl-3-O-(1-carboxyvinyl)-alpha-D-glucosamine + phosphate. Its pathway is cell wall biogenesis; peptidoglycan biosynthesis. In terms of biological role, cell wall formation. Adds enolpyruvyl to UDP-N-acetylglucosamine. This is UDP-N-acetylglucosamine 1-carboxyvinyltransferase from Pseudomonas fluorescens (strain ATCC BAA-477 / NRRL B-23932 / Pf-5).